The following is a 142-amino-acid chain: Transcriptional regulator MraZ (142 aa).

2 SpoVT-AbrB domains span residues 5–47 and 76–119; these read EFTH…PLNE and ATDC…SAER.

The protein belongs to the MraZ family. Forms oligomers.

The protein localises to the cytoplasm. It is found in the nucleoid. The protein is Transcriptional regulator MraZ of Limosilactobacillus reuteri (strain DSM 20016) (Lactobacillus reuteri).